The chain runs to 80 residues: RNA-binding protein Hfq (80 aa).

The 60-residue stretch at 10–69 folds into the Sm domain; that stretch reads DPFLNALRKEHVPVSIYLVNGIKLQGNIESFDQYVVLLRNTVTQMVYKHAISTVVPARPV.

It belongs to the Hfq family. Homohexamer.

RNA chaperone that binds small regulatory RNA (sRNAs) and mRNAs to facilitate mRNA translational regulation in response to envelope stress, environmental stress and changes in metabolite concentrations. Also binds with high specificity to tRNAs. In Burkholderia ambifaria (strain ATCC BAA-244 / DSM 16087 / CCUG 44356 / LMG 19182 / AMMD) (Burkholderia cepacia (strain AMMD)), this protein is RNA-binding protein Hfq.